We begin with the raw amino-acid sequence, 260 residues long: Protein FAM220A (260 aa).

2 disordered regions span residues 1–75 and 129–158; these read MKAG…SKAS and GSDWPGREPRATDNRGQYLKGESWVSGRPG. Residues 35–47 are compositionally biased toward polar residues; sequence RNPSPSVVPSWTD.

In terms of assembly, interacts with transcriptional activator STAT3; the interaction occurs in both the nucleus and the cytoplasm, is enhanced by IL6 and promotes STAT3 dephosphorylation, leading to negative regulation of STAT3 transcriptional activator activity. Can interact with both unphosphorylated and phosphorylated STAT3 but interacts preferentially with phosphorylated STAT3 in the nucleus. Interacts with protein phosphatase PTPN2/TC45; this promotes interaction of PTPN2 with STAT3, leading to dephosphorylation of STAT3 by PTPN2. As to expression, expressed at high levels in the testis where it is detected within elongated spermatids during the late stages (steps 9-16) of haploid germ cell development and in the tubular lumen (at protein level).

It localises to the nucleus. Its subcellular location is the cytoplasm. It is found in the cytoplasmic vesicle. The protein localises to the secretory vesicle. The protein resides in the acrosome. Its function is as follows. Promotes dephosphorylation of transcriptional activator STAT3 by interacting with both STAT3 and protein phosphatase PTPN2. This promotes interaction of PTPN2 with STAT3 and mediates STAT3 dephosphorylation by PTPN2, leading to negative regulation of STAT3 transcriptional activator activity. May be required for spermiogenesis or sperm function. The polypeptide is Protein FAM220A (Mus musculus (Mouse)).